The chain runs to 86 residues: Defensin-like protein 259 (86 aa).

A signal peptide spans 1–25; it reads MKNASLKLPLLIFILVITSNLGAEA. Cystine bridges form between Cys60–Cys76, Cys66–Cys83, and Cys70–Cys85.

The protein belongs to the DEFL family.

The protein resides in the secreted. The protein is Defensin-like protein 259 of Arabidopsis thaliana (Mouse-ear cress).